We begin with the raw amino-acid sequence, 340 residues long: Alcohol dehydrogenase patD (340 aa).

Cysteine 46 lines the Zn(2+) pocket. An NAD(+)-binding site is contributed by histidine 47. Zn(2+)-binding residues include histidine 67, glutamate 68, cysteine 101, cysteine 104, cysteine 112, and cysteine 154. Histidine 67 contributes to the substrate binding site. NAD(+) is bound by residues 178–183 (GLGGLG), 198–203 (VALSRD), lysine 206, 265–267 (LSI), 289–291 (PSG), and 297–299 (EDA).

This sequence belongs to the zinc-containing alcohol dehydrogenase family. Requires Zn(2+) as cofactor.

Its subcellular location is the cytoplasm. The protein localises to the cytosol. It carries out the reaction neopatulin + NADPH + H(+) = (E)-ascladiol + NADP(+). Its pathway is mycotoxin biosynthesis; patulin biosynthesis. Its function is as follows. Alcohol dehydrogenase; part of the gene cluster that mediates the biosynthesis of patulin, an acetate-derived tetraketide mycotoxin produced by several fungal species that shows antimicrobial properties against several bacteria. PatD catalyzes the conversion of neopatulin into E-ascladiol. The pathway begins with the synthesis of 6-methylsalicylic acid by the polyketide synthase (PKS) patK via condensation of acetate and malonate units. The 6-methylsalicylic acid decarboxylase patG then catalyzes the decarboxylation of 6-methylsalicylic acid to yield m-cresol (also known as 3-methylphenol). These first reactions occur in the cytosol. The intermediate m-cresol is then transported into the endoplasmic reticulum where the cytochrome P450 monooxygenase patH converts it to m-hydroxybenzyl alcohol, which is further converted to gentisyl alcohol by the cytochrome P450 monooxygenase patI. The oxidoreductases patJ and patO further convert gentisyl alcohol to isoepoxydon in the vacuole. PatN catalyzes then the transformation of isoepoxydon into phyllostine. The cluster protein patF is responsible for the conversion from phyllostine to neopatulin whereas the alcohol dehydrogenase patD converts neopatulin to E-ascladiol. The steps between isoepoxydon and E-ascladiol occur in the cytosol, and E-ascladiol is probably secreted to the extracellular space by one of the cluster-specific transporters patC or patM. Finally, the secreted patulin synthase patE catalyzes the conversion of E-ascladiol to patulin. The chain is Alcohol dehydrogenase patD from Penicillium expansum (Blue mold rot fungus).